The following is an 847-amino-acid chain: Ras GTPase-activating protein 2 (847 aa).

The span at 1-21 (MAAAAPAAAASPEAPAVSGSA) shows a compositional bias: low complexity. Residues 1 to 31 (MAAAAPAAAASPEAPAVSGSADPETGDEDSR) form a disordered region. Position 2 is an N-acetylalanine (Ala2). C2 domains follow at residues 19–137 (GSAD…ETWF) and 148–288 (VQGK…QAWY). The Ras-GAP domain maps to 371-588 (NKLVPFITAV…TDVKKFLDEI (218 aa)). The residue at position 554 (Ser554) is a Phosphoserine. In terms of domain architecture, PH spans 603–704 (VHLKEGEMYK…WIDVLCRVSR (102 aa)). The segment at 706-742 (NHNRLSSFHPSAYLNGNWLCCQETSESTPGCKPCTAG) adopts a Btk-type zinc-finger fold. 4 residues coordinate Zn(2+): His714, Cys725, Cys726, and Cys736. The tract at residues 819 to 847 (DEPHEKYRKKRSSSAKYGSKENPIVGKIS) is disordered.

It localises to the cell membrane. Its function is as follows. Inhibitory regulator of the Ras-cyclic AMP pathway. Binds inositol tetrakisphosphate (IP4) and phospholipids. This Mus musculus (Mouse) protein is Ras GTPase-activating protein 2 (Rasa2).